The primary structure comprises 252 residues: uncharacterized protein (252 aa).

This sequence belongs to the methyltransferase superfamily.

This is an uncharacterized protein from Mycobacterium sp. (strain JLS).